Consider the following 373-residue polypeptide: 3-isopropylmalate dehydrogenase (373 aa).

82 to 93 (GPKWGTGAVRPE) is an NAD(+) binding site. Substrate contacts are provided by Arg-100, Arg-110, Arg-139, and Asp-231. Mg(2+)-binding residues include Asp-231 and Asp-260. 295–306 (GSAPDLPENKVN) provides a ligand contact to NAD(+).

Belongs to the isocitrate and isopropylmalate dehydrogenases family. As to quaternary structure, homodimer. Mg(2+) is required as a cofactor. It depends on Mn(2+) as a cofactor.

The protein localises to the cytoplasm. It carries out the reaction (2R,3S)-3-isopropylmalate + NAD(+) = 4-methyl-2-oxopentanoate + CO2 + NADH. It participates in amino-acid biosynthesis; L-leucine biosynthesis; L-leucine from 3-methyl-2-oxobutanoate: step 3/4. Its function is as follows. Catalyzes the oxidation of 3-carboxy-2-hydroxy-4-methylpentanoate (3-isopropylmalate) to 3-carboxy-4-methyl-2-oxopentanoate. The product decarboxylates to 4-methyl-2 oxopentanoate. This Scheffersomyces stipitis (strain ATCC 58785 / CBS 6054 / NBRC 10063 / NRRL Y-11545) (Yeast) protein is 3-isopropylmalate dehydrogenase (LEU2).